We begin with the raw amino-acid sequence, 361 residues long: Trehalose 6-phosphate phosphatase RA3 (361 aa).

Belongs to the trehalose phosphatase family. The cofactor is a divalent metal cation. Expressed in axillary inflorescence meristems.

It catalyses the reaction alpha,alpha-trehalose 6-phosphate + H2O = alpha,alpha-trehalose + phosphate. It participates in glycan biosynthesis; trehalose biosynthesis. Its function is as follows. Removes the phosphate from trehalose 6-phosphate to produce free trehalose. Is specific for trehalose 6-phosphate. Does not possess activity toward glucose, sucrose or fructose 6-phosphates. Regulates inflorescence branching. Required to establish the correct identity and determinacy of axillary meristems in both male and female inflorescences. May act through a sugar signal that moves into axillary meristems. Acts upstream of RA1. May have a transcriptional regulatory function. The protein is Trehalose 6-phosphate phosphatase RA3 of Zea mays (Maize).